A 188-amino-acid chain; its full sequence is Pyridoxal 5'-phosphate synthase subunit PdxT (188 aa).

46-48 (GES) lines the L-glutamine pocket. Cys78 serves as the catalytic Nucleophile. L-glutamine is bound by residues Arg105 and 134–135 (IR). Residues His170 and Glu172 each act as charge relay system in the active site.

Belongs to the glutaminase PdxT/SNO family. As to quaternary structure, in the presence of PdxS, forms a dodecamer of heterodimers. Only shows activity in the heterodimer.

It catalyses the reaction aldehydo-D-ribose 5-phosphate + D-glyceraldehyde 3-phosphate + L-glutamine = pyridoxal 5'-phosphate + L-glutamate + phosphate + 3 H2O + H(+). The enzyme catalyses L-glutamine + H2O = L-glutamate + NH4(+). The protein operates within cofactor biosynthesis; pyridoxal 5'-phosphate biosynthesis. Catalyzes the hydrolysis of glutamine to glutamate and ammonia as part of the biosynthesis of pyridoxal 5'-phosphate. The resulting ammonia molecule is channeled to the active site of PdxS. This Desulforamulus reducens (strain ATCC BAA-1160 / DSM 100696 / MI-1) (Desulfotomaculum reducens) protein is Pyridoxal 5'-phosphate synthase subunit PdxT.